The chain runs to 709 residues: Septu protein PtuA (709 aa).

Functionally, component of antiviral defense system Septu type II, composed of PtuA and PtuB. Expression of Septu type II in B.subtilis (strain BEST7003) confers resistance to phages SBSphiC and SpBeta. May be an ATPase. In Bacillus mycoides (strain KBAB4) (Bacillus weihenstephanensis), this protein is Septu protein PtuA.